The following is a 213-amino-acid chain: MSRNSFIPHVPDIQAAGGLVPMVVEQSARGERAYDIYSRLLKERIIFLVGQVEDYMANLVVAQLLFLEAENPEKDIHLYINSPGGSVTAGMSIYDTMQFIKPNVSTTCIGQACSMGALLLAGGAAGKRYCLPHSRMMIHQPLGGFQGQASDIEIHAKEILFIKERLNQILAHHTGQPLDVIARDTDRDRFMSGDEAVKYGLIDKVMTQRDLAV.

The active-site Nucleophile is Ser-114. His-139 is an active-site residue.

The protein belongs to the peptidase S14 family. In terms of assembly, fourteen ClpP subunits assemble into 2 heptameric rings which stack back to back to give a disk-like structure with a central cavity, resembling the structure of eukaryotic proteasomes.

The protein resides in the cytoplasm. The enzyme catalyses Hydrolysis of proteins to small peptides in the presence of ATP and magnesium. alpha-casein is the usual test substrate. In the absence of ATP, only oligopeptides shorter than five residues are hydrolyzed (such as succinyl-Leu-Tyr-|-NHMec, and Leu-Tyr-Leu-|-Tyr-Trp, in which cleavage of the -Tyr-|-Leu- and -Tyr-|-Trp bonds also occurs).. In terms of biological role, cleaves peptides in various proteins in a process that requires ATP hydrolysis. Has a chymotrypsin-like activity. Plays a major role in the degradation of misfolded proteins. This is ATP-dependent Clp protease proteolytic subunit 1 from Pseudomonas aeruginosa (strain ATCC 15692 / DSM 22644 / CIP 104116 / JCM 14847 / LMG 12228 / 1C / PRS 101 / PAO1).